Here is a 102-residue protein sequence, read N- to C-terminus: Large ribosomal subunit protein bL21 (102 aa).

It belongs to the bacterial ribosomal protein bL21 family. In terms of assembly, part of the 50S ribosomal subunit. Contacts protein L20.

This protein binds to 23S rRNA in the presence of protein L20. The protein is Large ribosomal subunit protein bL21 of Pediococcus pentosaceus (strain ATCC 25745 / CCUG 21536 / LMG 10740 / 183-1w).